A 361-amino-acid polypeptide reads, in one-letter code: Protein SSUH2 homolog (361 aa).

It localises to the cytoplasm. The protein localises to the nucleus. Functionally, plays a role in odontogenesis. The protein is Protein SSUH2 homolog of Danio rerio (Zebrafish).